The sequence spans 477 residues: Cytochrome P450 monooxygenase poxC (477 aa).

The chain crosses the membrane as a helical span at residues 24–41 (AWHFAVLSFVYVIARSIY). Cys420 provides a ligand contact to heme.

This sequence belongs to the cytochrome P450 family. Requires heme as cofactor.

It is found in the membrane. It functions in the pathway secondary metabolite biosynthesis. In terms of biological role, cytochrome P450 monooxygenase; part of the gene cluster that mediates the biosynthesis of oxaleimides, cytotoxic compounds containing an unusual disubstituted succinimide moiety. The first step of the pathway is provided by the HR-PKS poxF that serves in a new mode of collaborative biosynthesis with the PKS-NRPS poxE, by providing the olefin containing amino acid substrate via the synthesis of an ACP-bound dec-4-enoate. The cytochrome P450 monooxygenase poxM-catalyzed oxidation at the alpha-position creates the enzyme-bound 2-hydroxydec-4-enoyl-ACP thioester, which may be prone to spontaneous hydrolysis to yield 2-hydroxydec-4-enoic acid due to increased electrophilicity of the carbonyl. 2-hydroxydec-4-enoic acid can then be further oxidized by poxM to yield the alpha-ketoacid 2-oxodec-4-enoicacid, which is reductively aminated by the aminotransferase poxL to yield (S,E)-2-aminodec-4-enoic acid. The Hybrid PKS-NRPS synthetase poxE then performs condensation between the octaketide product of its PKS modules and the amino group of (S,E)-2-aminodec-4-enoic acid which is activated and incorporated by the adenylation domain. The resulting aminoacyl product can be cyclized by the Diels-Alderase PoxQ and reductively released by the reductive (R) domain of poxE to yield an aldehyde intermediate. The released aldehyde is then substrate for a Knoevenagel condensation by the hydrolyase poxO followed by an oxidation at the 5-position of the pyrrolidone ring. The presence of the olefin from the amino acid building block allows for migration of the substituted allyl group to occur. This allylic transposition reaction takes place in a conjugate addition, semipinacol-like fashion to yield a succinimide intermediate. Iterative two-electron oxidations of the C7 methyl of the succinimide intermediate to the carboxylic acid can be catalyzed by one of two remaining cytochrome P450 monooxygenasess poxC or poxD to yield oxaleimide A. Subsequent oxidation yields the maleimide scaffold oxaleimide I. Both oxaleimide A and oxaleimide I can undergo oxidative modifications in the decalin ring to yield the series of products oxaleimides B to H. The sequence is that of Cytochrome P450 monooxygenase poxC from Penicillium oxalicum (strain 114-2 / CGMCC 5302) (Penicillium decumbens).